The primary structure comprises 174 residues: Ribosome maturation factor RimM (174 aa).

Residues 91–164 (DDAWYPHQLQ…KVVLSPPGGL (74 aa)) form the PRC barrel domain.

Belongs to the RimM family. Binds ribosomal protein uS19.

It is found in the cytoplasm. An accessory protein needed during the final step in the assembly of 30S ribosomal subunit, possibly for assembly of the head region. Essential for efficient processing of 16S rRNA. May be needed both before and after RbfA during the maturation of 16S rRNA. It has affinity for free ribosomal 30S subunits but not for 70S ribosomes. The sequence is that of Ribosome maturation factor RimM from Kineococcus radiotolerans (strain ATCC BAA-149 / DSM 14245 / SRS30216).